A 354-amino-acid chain; its full sequence is Elongation factor Ts, mitochondrial (354 aa).

The transit peptide at M1 to Y47 directs the protein to the mitochondrion.

It belongs to the EF-Ts family.

It localises to the mitochondrion. Its function is as follows. Associates with the EF-Tu.GDP complex and induces the exchange of GDP to GTP. It remains bound to the aminoacyl-tRNA.EF-Tu.GTP complex up to the GTP hydrolysis stage on the ribosome. The sequence is that of Elongation factor Ts, mitochondrial (tsfm) from Heterostelium pallidum (strain ATCC 26659 / Pp 5 / PN500) (Cellular slime mold).